The primary structure comprises 574 residues: Isocitrate dehydrogenase kinase/phosphatase (574 aa).

Residues 311-317 (APGIRGM) and lysine 332 each bind ATP. Residue aspartate 367 is part of the active site.

The protein belongs to the AceK family.

It localises to the cytoplasm. It carries out the reaction L-seryl-[isocitrate dehydrogenase] + ATP = O-phospho-L-seryl-[isocitrate dehydrogenase] + ADP + H(+). Bifunctional enzyme which can phosphorylate or dephosphorylate isocitrate dehydrogenase (IDH) on a specific serine residue. This is a regulatory mechanism which enables bacteria to bypass the Krebs cycle via the glyoxylate shunt in response to the source of carbon. When bacteria are grown on glucose, IDH is fully active and unphosphorylated, but when grown on acetate or ethanol, the activity of IDH declines drastically concomitant with its phosphorylation. The sequence is that of Isocitrate dehydrogenase kinase/phosphatase from Shigella boydii serotype 4 (strain Sb227).